The primary structure comprises 180 residues: 3-phenylpropionate/cinnamic acid dioxygenase subunit beta (180 aa).

It belongs to the bacterial ring-hydroxylating dioxygenase beta subunit family. In terms of assembly, this dioxygenase system consists of four proteins: the two subunits of the hydroxylase component (HcaE and HcaF), a ferredoxin (HcaC) and a ferredoxin reductase (HcaD).

The enzyme catalyses 3-phenylpropanoate + NADH + O2 + H(+) = 3-(cis-5,6-dihydroxycyclohexa-1,3-dien-1-yl)propanoate + NAD(+). It carries out the reaction (E)-cinnamate + NADH + O2 + H(+) = (2E)-3-(cis-5,6-dihydroxycyclohexa-1,3-dien-1-yl)prop-2-enoate + NAD(+). The protein operates within aromatic compound metabolism; 3-phenylpropanoate degradation. In terms of biological role, part of the multicomponent 3-phenylpropionate dioxygenase. Converts 3-phenylpropionic acid (PP) and cinnamic acid (CI) into 3-phenylpropionate-dihydrodiol (PP-dihydrodiol) and cinnamic acid-dihydrodiol (CI-dihydrodiol), respectively. This chain is 3-phenylpropionate/cinnamic acid dioxygenase subunit beta, found in Photorhabdus laumondii subsp. laumondii (strain DSM 15139 / CIP 105565 / TT01) (Photorhabdus luminescens subsp. laumondii).